A 295-amino-acid polypeptide reads, in one-letter code: MLCTSPVNCLDSVCCTSINISSLVRRAALTHNDNHFNYEKTHNFKVHTFRGPHWCEYCANFMWGLIAQGVRCSDCGLNVHKQCSKHVPNDCQPDLKRIKKVYCCDLTTLVKAHNTQRPMVVDICIREIEARGLKSEGLYRVSGFTEHIEDVKMAFDRDGEKADISANIYPDINIITGALKLYFRDLPIPIITYDTYTKFIEAAKISNADERLEAVHEVLMLLPPAHYETLRYLMIHLKKVTMNEKDNLMNAENLGIVFGPTLMRPPEDSTLTTLHDMRYQKLIVQILIENEDVLF.

Residues 41 to 91 (THNFKVHTFRGPHWCEYCANFMWGLIAQGVRCSDCGLNVHKQCSKHVPNDC) form a Phorbol-ester/DAG-type zinc finger. The Rho-GAP domain occupies 104–295 (CDLTTLVKAH…ILIENEDVLF (192 aa)).

In terms of tissue distribution, found in cerebellum and testis.

It localises to the membrane. Its activity is regulated as follows. In the inactive state, the N terminus protrudes into the active site of the Rho-GAP domain, sterically blocking Rac binding. Phospholipid binding to the Phorbol-ester/DAG-type zinc-finger/C1 domain triggers the cooperative dissociation of these interactions, allowing the N-terminus to move out of the active site and thereby activating the enzyme. GTPase-activating protein for p21-rac. The sequence is that of Beta-chimaerin (Chn2) from Rattus norvegicus (Rat).